A 273-amino-acid polypeptide reads, in one-letter code: Undecaprenyl-diphosphatase (273 aa).

The next 7 helical transmembrane spans lie at 6–26 (SLLIAAILGVVEGLTEFLPVS), 45–65 (AKTFEVVIQLGSILAVVVMFW), 90–110 (LTLIHILLGMIPAVVLGLVFH), 116–136 (LFNPINVMYTLVVGGLLLIAA), 190–210 (YAASEFSFLLAVPMMMGATVL), 222–242 (ADIPMFAVGFVTAFVVALIAI), and 252–272 (ISFIPFAIYRFVVAAAVYVVF).

Belongs to the UppP family.

The protein localises to the cell inner membrane. The catalysed reaction is di-trans,octa-cis-undecaprenyl diphosphate + H2O = di-trans,octa-cis-undecaprenyl phosphate + phosphate + H(+). Its function is as follows. Catalyzes the dephosphorylation of undecaprenyl diphosphate (UPP). Confers resistance to bacitracin. This is Undecaprenyl-diphosphatase from Salmonella paratyphi C (strain RKS4594).